A 154-amino-acid polypeptide reads, in one-letter code: Putative protein heh-1 (154 aa).

Positions 1–15 (MKTVIFLALLGLAAA) are cleaved as a signal peptide. Intrachain disulfides connect C39-C50 and C97-C103.

This sequence belongs to the NPC2 family.

The protein resides in the secreted. In Caenorhabditis elegans, this protein is Putative protein heh-1 (heh-1).